Consider the following 70-residue polypeptide: Cold shock-like protein CspH (70 aa).

A CSD domain is found at 7 to 67; sequence GIVKTFDCKS…GLRGPTAANV (61 aa).

It localises to the cytoplasm. This Salmonella typhi protein is Cold shock-like protein CspH (cspH).